The sequence spans 342 residues: uncharacterized protein (342 aa).

Residue 9–31 participates in NADP(+) binding; sequence LIFGGTTGIGLMTTIDFIIHNTS. Residue S208 coordinates substrate. The Proton acceptor role is filled by Y222.

Belongs to the short-chain dehydrogenases/reductases (SDR) family.

This is an uncharacterized protein from Acanthamoeba polyphaga (Amoeba).